The following is a 354-amino-acid chain: NADH-quinone oxidoreductase subunit H (354 aa).

8 helical membrane-spanning segments follow: residues 22-42 (ILIRAVLIVVPVLLCVAYLIL), 91-111 (YLVAPLMVLMPAVAVWAVIPF), 124-144 (LLYVMAISSVGVYGVILAGWA), 162-182 (VSYEIAMGFALVTVLMVSGSL), 203-223 (LLSWNWLPLLPMFGVYFISGV), 250-270 (GMTFALFFLAEYINMIIISTM), 291-311 (IPGFFWLVIKVFLLLSVFIWI), and 326-346 (LGWKIFIPLTVAWLIIVAIWI).

The protein belongs to the complex I subunit 1 family. NDH-1 is composed of 14 different subunits. Subunits NuoA, H, J, K, L, M, N constitute the membrane sector of the complex.

Its subcellular location is the cell inner membrane. The catalysed reaction is a quinone + NADH + 5 H(+)(in) = a quinol + NAD(+) + 4 H(+)(out). Functionally, NDH-1 shuttles electrons from NADH, via FMN and iron-sulfur (Fe-S) centers, to quinones in the respiratory chain. The immediate electron acceptor for the enzyme in this species is believed to be ubiquinone. Couples the redox reaction to proton translocation (for every two electrons transferred, four hydrogen ions are translocated across the cytoplasmic membrane), and thus conserves the redox energy in a proton gradient. This subunit may bind ubiquinone. The polypeptide is NADH-quinone oxidoreductase subunit H (Cupriavidus metallidurans (strain ATCC 43123 / DSM 2839 / NBRC 102507 / CH34) (Ralstonia metallidurans)).